The chain runs to 635 residues: Threonine--tRNA ligase (635 aa).

One can recognise a TGS domain in the interval 1–61; that stretch reads MINISFPDGS…DNDCKLRILT (61 aa). The segment at 242-533 is catalytic; sequence DHRKLGRELD…LIEEYAGRFP (292 aa). 3 residues coordinate Zn(2+): Cys-333, His-384, and His-510.

This sequence belongs to the class-II aminoacyl-tRNA synthetase family. As to quaternary structure, homodimer. The cofactor is Zn(2+).

It is found in the cytoplasm. The enzyme catalyses tRNA(Thr) + L-threonine + ATP = L-threonyl-tRNA(Thr) + AMP + diphosphate + H(+). Functionally, catalyzes the attachment of threonine to tRNA(Thr) in a two-step reaction: L-threonine is first activated by ATP to form Thr-AMP and then transferred to the acceptor end of tRNA(Thr). Also edits incorrectly charged L-seryl-tRNA(Thr). This Rickettsia africae (strain ESF-5) protein is Threonine--tRNA ligase.